A 329-amino-acid chain; its full sequence is Tryptophan--tRNA ligase (329 aa).

Residues 9–11 (QPS) and 17–18 (GN) each bind ATP. The short motif at 10 to 18 (PSGIPTIGN) is the 'HIGH' region element. Position 133 (Asp-133) interacts with L-tryptophan. ATP is bound by residues 145–147 (GDD), Val-184, and 193–197 (KMSKS). Positions 193–197 (KMSKS) match the 'KMSKS' region motif.

It belongs to the class-I aminoacyl-tRNA synthetase family. Homodimer.

It localises to the cytoplasm. The catalysed reaction is tRNA(Trp) + L-tryptophan + ATP = L-tryptophyl-tRNA(Trp) + AMP + diphosphate + H(+). Functionally, catalyzes the attachment of tryptophan to tRNA(Trp). The protein is Tryptophan--tRNA ligase of Staphylococcus aureus (strain MRSA252).